A 349-amino-acid chain; its full sequence is Mitochondrial carrier protein SCaMC-3L (349 aa).

The next 4 helical transmembrane spans lie at 88 to 104, 149 to 168, 188 to 205, and 243 to 261; these read GALWKFLLSGAMAGAVS, GNGINVLKIAPEYAIKFSVF, LLAGSLAVATSQTLINPM, and YLPNMLGIIPYACTDLAVY. Solcar repeat units follow at residues 88-174 and 182-267; these read GALW…CKNY and PPFQ…LNCL.

This sequence belongs to the mitochondrial carrier (TC 2.A.29) family.

It localises to the mitochondrion inner membrane. The catalysed reaction is Mg(2+)(out) + phosphate(in) + ATP(out) = Mg(2+)(in) + phosphate(out) + ATP(in). It catalyses the reaction ADP(out) + phosphate(in) + H(+)(out) = ADP(in) + phosphate(out) + H(+)(in). Its function is as follows. Calcium-independent ATP-Mg/Pi exchanger that catalyzes the electroneutral exchange of Mg-ATP or free ADP against an hydrogenphosphate and participates in the net transport of adenine nucleotides across the mitochondria inner membrane. The protein is Mitochondrial carrier protein SCaMC-3L of Bos taurus (Bovine).